The primary structure comprises 735 residues: Disintegrin and metalloproteinase domain-containing protein 2 (735 aa).

The signal sequence occupies residues 1-15 (MLCLLLLLCGLASLG). The propeptide occupies 16 to 176 (GPLKKYVENS…KIKSIKSSVR (161 aa)). Residues 16–680 (GPLKKYVENS…EGAYHTKSRK (665 aa)) are Extracellular-facing. N-linked (GlcNAc...) asparagine glycosylation is found at Asn55, Asn220, and Asn288. In terms of domain architecture, Peptidase M12B spans 178–375 (HYIEMHIIVE…QVSQCLQNQP (198 aa)). 4 disulfide bridges follow: Cys287–Cys370, Cys329–Cys354, Cys331–Cys336, and Cys442–Cys455. Residue Asn353 is glycosylated (N-linked (GlcNAc...) asparagine). Residues 384-470 (NPVCGNNRVE…ACQEDLYVIN (87 aa)) form the Disintegrin domain. Residues Asn456 and Asn564 are each glycosylated (N-linked (GlcNAc...) asparagine). In terms of domain architecture, EGF-like spans 610–643 (LGYDCTPATCSDHGVCNNKRHCHCNPTYVPPNCE). Cystine bridges form between Cys614–Cys625, Cys619–Cys631, and Cys633–Cys642. The helical transmembrane segment at 681 to 701 (WPFFLIIPFFVIFSVLVATVV) threads the bilayer. The Cytoplasmic portion of the chain corresponds to 702–735 (KVYYQKKKWKTEDYANDENIESESEPKSSKVSSK). The tract at residues 716–735 (ANDENIESESEPKSSKVSSK) is disordered. Ser723 is subject to Phosphoserine.

As to quaternary structure, heterodimer with ADAM1/fertilin subunit alpha. In terms of processing, the signal and the metalloprotease domain are cleaved during the epididymal maturation of the spermatozoa. Expressed specifically in testis.

The protein resides in the membrane. Its function is as follows. Sperm surface membrane protein that may be involved in sperm-egg plasma membrane adhesion and fusion during fertilization. Could have a direct role in sperm-zona binding or migration of sperm from the uterus into the oviduct. Interactions with egg membrane could be mediated via binding between its disintegrin-like domain to one or more integrins receptors on the egg. This is a non catalytic metalloprotease-like protein. This Cavia porcellus (Guinea pig) protein is Disintegrin and metalloproteinase domain-containing protein 2 (ADAM2).